We begin with the raw amino-acid sequence, 162 residues long: Dihydrofolate reductase (162 aa).

The DHFR domain occupies K3–R161. I7 to A9 contributes to the substrate binding site. NADP(+) is bound by residues A8–A9 and I16–A21. D29 is a binding site for substrate. G45–T48 is a binding site for NADP(+). R60 lines the substrate pocket. NADP(+)-binding positions include I65–Q68 and M98–I103. Residue T117 participates in substrate binding.

Belongs to the dihydrofolate reductase family.

It catalyses the reaction (6S)-5,6,7,8-tetrahydrofolate + NADP(+) = 7,8-dihydrofolate + NADPH + H(+). Its pathway is cofactor biosynthesis; tetrahydrofolate biosynthesis; 5,6,7,8-tetrahydrofolate from 7,8-dihydrofolate: step 1/1. In terms of biological role, key enzyme in folate metabolism. Catalyzes an essential reaction for de novo glycine and purine synthesis, and for DNA precursor synthesis. The polypeptide is Dihydrofolate reductase (folA) (Neisseria meningitidis serogroup B (strain ATCC BAA-335 / MC58)).